Reading from the N-terminus, the 586-residue chain is Acyl-coenzyme A synthetase ACSM3, mitochondrial (586 aa).

The N-terminal 27 residues, 1-27, are a transit peptide targeting the mitochondrion; the sequence is MLACVTMKMLRHAKCFQRLAIFGSVRA. N6-succinyllysine is present on residues K73 and K106. The residue at position 157 (K157) is an N6-acetyllysine. Residues 235 to 243, 374 to 379, D461, R476, and K572 each bind ATP; these read TSGTSGYPK and EGYGQT.

It belongs to the ATP-dependent AMP-binding enzyme family. Mg(2+) serves as cofactor. Requires Mn(2+) as cofactor.

Its subcellular location is the mitochondrion. The protein localises to the mitochondrion matrix. The enzyme catalyses a medium-chain fatty acid + ATP + CoA = a medium-chain fatty acyl-CoA + AMP + diphosphate. It carries out the reaction propanoate + ATP + CoA = propanoyl-CoA + AMP + diphosphate. It catalyses the reaction butanoate + ATP + CoA = butanoyl-CoA + AMP + diphosphate. The catalysed reaction is 2-methylpropanoate + ATP + CoA = 2-methylpropanoyl-CoA + AMP + diphosphate. The enzyme catalyses 2-methylbutanoate + ATP + CoA = 2-methylbutanoyl-CoA + AMP + diphosphate. It carries out the reaction octanoate + ATP + CoA = octanoyl-CoA + AMP + diphosphate. Its function is as follows. Catalyzes the activation of fatty acids by CoA to produce an acyl-CoA, the first step in fatty acid metabolism. Capable of activating medium-chain fatty acids with a preference for isobutyrate among fatty acids with 2-6 carbon atoms. In Pongo abelii (Sumatran orangutan), this protein is Acyl-coenzyme A synthetase ACSM3, mitochondrial (ACSM3).